Here is a 288-residue protein sequence, read N- to C-terminus: RELT-like protein 1 (288 aa).

The N-terminal stretch at 1–23 is a signal peptide; that stretch reads MAPPAASGIPSIAPSLGPTAVWL. The Extracellular segment spans residues 24–57; the sequence is GNRSDLGDVQALASRDLPTTTVTAGNNNKPEHLE. The N-linked (GlcNAc...) asparagine glycan is linked to N25. A helical transmembrane segment spans residues 58-78; sequence YVAFVLVPVFFIMGLLGILIC. Residues 79 to 288 lie on the Cytoplasmic side of the membrane; that stretch reads HVLKKKGYRC…EGTQERRSSE (210 aa). Disordered regions lie at residues 145-172 and 237-288; these read FEPESPMSPNAPGSPTSPGSPLSPGAAS and HKSN…RSSE. The segment covering 152–172 has biased composition (low complexity); sequence SPNAPGSPTSPGSPLSPGAAS. The segment covering 237 to 246 has biased composition (basic and acidic residues); that stretch reads HKSNSKERKS.

This sequence belongs to the RELT family.

It localises to the cell membrane. In Gallus gallus (Chicken), this protein is RELT-like protein 1 (RELL1).